A 308-amino-acid chain; its full sequence is HPr kinase/phosphorylase (308 aa).

Residues H138 and K159 contribute to the active site. Residue 153–160 (GESGLGKS) participates in ATP binding. S160 contacts Mg(2+). Catalysis depends on D177, which acts as the Proton acceptor; for phosphorylation activity. Proton donor; for dephosphorylation activity. The tract at residues 201-210 (LEVRGLGLLD) is important for the catalytic mechanism of both phosphorylation and dephosphorylation. Position 202 (E202) interacts with Mg(2+). The active site involves R243. Residues 264-269 (QVAAGR) are important for the catalytic mechanism of dephosphorylation.

The protein belongs to the HPrK/P family. Homohexamer. Mg(2+) serves as cofactor.

The enzyme catalyses [HPr protein]-L-serine + ATP = [HPr protein]-O-phospho-L-serine + ADP + H(+). The catalysed reaction is [HPr protein]-O-phospho-L-serine + phosphate + H(+) = [HPr protein]-L-serine + diphosphate. Functionally, catalyzes the ATP- as well as the pyrophosphate-dependent phosphorylation of a specific serine residue in HPr, a phosphocarrier protein of the phosphoenolpyruvate-dependent sugar phosphotransferase system (PTS). HprK/P also catalyzes the pyrophosphate-producing, inorganic phosphate-dependent dephosphorylation (phosphorolysis) of seryl-phosphorylated HPr (P-Ser-HPr). This Bordetella petrii (strain ATCC BAA-461 / DSM 12804 / CCUG 43448) protein is HPr kinase/phosphorylase.